We begin with the raw amino-acid sequence, 80 residues long: U19-lycotoxin-Ls1b (80 aa).

The signal sequence occupies residues 1–22 (MSPKVQALIFIVGLITLLAAHA). A propeptide spanning residues 23-34 (QEELSDNIESER) is cleaved from the precursor. Cystine bridges form between Cys36–Cys50, Cys43–Cys55, Cys49–Cys66, and Cys57–Cys64.

This sequence belongs to the neurotoxin 02 (plectoxin) family. 05 (U19-lycotoxin) subfamily. As to expression, expressed by the venom gland.

The protein localises to the secreted. The chain is U19-lycotoxin-Ls1b from Lycosa singoriensis (Wolf spider).